A 334-amino-acid chain; its full sequence is Methionine adenosyltransferase 2 subunit beta (334 aa).

NADP(+) contacts are provided by residues 37 to 40 (TGLL), 60 to 62 (FRR), 71 to 72 (NL), C93, R97, Y159, and L185. The residue at position 309 (T309) is a Phosphothreonine. Residues 319-334 (LWPFLIDKRWRQTVFH) are required for interaction with MAT2A.

The protein belongs to the dTDP-4-dehydrorhamnose reductase family. MAT2B subfamily. Heterotrimer; composed of a catalytic MAT2A homodimer that binds one regulatory MAT2B chain. Heterohexamer; composed of a central, catalytic MAT2A homotetramer flanked on either side by a regulatory MAT2B chain. NADP binding increases the affinity for MAT2A.

It participates in amino-acid biosynthesis; S-adenosyl-L-methionine biosynthesis; S-adenosyl-L-methionine from L-methionine: step 1/1. Regulatory subunit of S-adenosylmethionine synthetase 2, an enzyme that catalyzes the formation of S-adenosylmethionine from methionine and ATP. Regulates MAT2A catalytic activity by changing its kinetic properties, increasing its affinity for L-methionine. Can bind NADP (in vitro). The polypeptide is Methionine adenosyltransferase 2 subunit beta (Mat2b) (Mus musculus (Mouse)).